The chain runs to 516 residues: Cysteine--tRNA ligase (516 aa).

Cys34 is a Zn(2+) binding site. The 'HIGH' region motif lies at 36 to 46; the sequence is PTVYNFAHLGN. Residues Cys225, His250, and Glu254 each contribute to the Zn(2+) site. Residues 285–289 carry the 'KMSKS' region motif; it reads KMSKS. Lys288 provides a ligand contact to ATP.

It belongs to the class-I aminoacyl-tRNA synthetase family. Monomer. Zn(2+) is required as a cofactor.

The protein resides in the cytoplasm. It carries out the reaction tRNA(Cys) + L-cysteine + ATP = L-cysteinyl-tRNA(Cys) + AMP + diphosphate. In Zymomonas mobilis subsp. mobilis (strain ATCC 31821 / ZM4 / CP4), this protein is Cysteine--tRNA ligase.